A 339-amino-acid chain; its full sequence is GTPase Obg (339 aa).

The region spanning 1 to 158 is the Obg domain; the sequence is MKFLDQVDLR…RDLTFELKLM (158 aa). Disordered stretches follow at residues 66 to 86 and 125 to 148; these read FAED…GEDK and GNAF…PGEE. Over residues 72 to 86 the composition is skewed to basic and acidic residues; the sequence is PGGRREQTGASGEDK. Residues 129 to 138 show a composition bias toward polar residues; sequence FKSSTNQAPR. The OBG-type G domain maps to 159–329; it reads ADVGLVGFPN…LKYTLFDTVH (171 aa). Residues 165–172, 190–194, 212–215, 279–282, and 310–312 each bind GTP; these read GFPNAGKS, FTTLT, DIPG, SKID, and SAV. Mg(2+)-binding residues include serine 172 and threonine 192.

This sequence belongs to the TRAFAC class OBG-HflX-like GTPase superfamily. OBG GTPase family. As to quaternary structure, monomer. It depends on Mg(2+) as a cofactor.

It localises to the cytoplasm. Functionally, an essential GTPase which binds GTP, GDP and possibly (p)ppGpp with moderate affinity, with high nucleotide exchange rates and a fairly low GTP hydrolysis rate. Plays a role in control of the cell cycle, stress response, ribosome biogenesis and in those bacteria that undergo differentiation, in morphogenesis control. The protein is GTPase Obg of Salinibacter ruber (strain DSM 13855 / M31).